The primary structure comprises 363 residues: MAQNSLRLVEDKSVDKSKALEAALSQIERSFGKGSIMKLGSNENVVEVETVSTGSLSLDIALGIGGLPKGRIIEIYGPESSGKTTLALQTIAEAQKKGGICAFVDAEHALDPVYARKLGVDLQSLLISQPDTGEQALEITDTLVRSGAVDVLVIDSVAALTPRAEIEGEMGDSLPGLQARLMSQALRKLTASISKSKCMVIFINQIRMKIGVMFGSPETTTGGNALKFYASVRLDIRRIGAVKEREEVVGNQTRVKVVKNKMAPPFKQVEFDIMYGEGVSKTGELVDLGVKAGIVEKSGAWFSYNSQRLGQGRENAKTFLRDNPDTANEIELALRQNAGLIADRFLQNGGPDAGEGDDGSDEG.

Position 77 to 84 (77 to 84 (GPESSGKT)) interacts with ATP.

This sequence belongs to the RecA family.

The protein localises to the cytoplasm. Functionally, can catalyze the hydrolysis of ATP in the presence of single-stranded DNA, the ATP-dependent uptake of single-stranded DNA by duplex DNA, and the ATP-dependent hybridization of homologous single-stranded DNAs. It interacts with LexA causing its activation and leading to its autocatalytic cleavage. This is Protein RecA from Agrobacterium fabrum (strain C58 / ATCC 33970) (Agrobacterium tumefaciens (strain C58)).